The following is a 102-amino-acid chain: MAAVSLSVSTVKPLGDRVFVKVSASEKRPRRLYFPDTAKEKPQVGEVVALGAGKRNDDGSRQELEVKVGDLLLYSKYAGTDVKLGTEEYVLLSEKDILAMVG.

This sequence belongs to the GroES chaperonin family. As to quaternary structure, heptamer of 7 subunits arranged in a ring. Interacts with the chaperonin GroEL.

It is found in the cytoplasm. Functionally, together with the chaperonin GroEL, plays an essential role in assisting protein folding. The GroEL-GroES system forms a nano-cage that allows encapsulation of the non-native substrate proteins and provides a physical environment optimized to promote and accelerate protein folding. GroES binds to the apical surface of the GroEL ring, thereby capping the opening of the GroEL channel. The sequence is that of Co-chaperonin GroES from Anabaena sp. (strain L31).